Here is a 270-residue protein sequence, read N- to C-terminus: Aliphatic sulfonates import ATP-binding protein SsuB (270 aa).

One can recognise an ABC transporter domain in the interval 17–238; sequence LAANDLRRTF…VRGSHRLAAL (222 aa). Residue 49 to 56 participates in ATP binding; the sequence is GRSGCGKS. The segment at 250–270 is disordered; sequence PGTPPEPEPVAPLPTHLRWAH. Residues 251–261 are compositionally biased toward pro residues; that stretch reads GTPPEPEPVAP.

This sequence belongs to the ABC transporter superfamily. Aliphatic sulfonates importer (TC 3.A.1.17.2) family. As to quaternary structure, the complex is composed of two ATP-binding proteins (SsuB), two transmembrane proteins (SsuC) and a solute-binding protein (SsuA).

Its subcellular location is the cell inner membrane. The catalysed reaction is ATP + H2O + aliphatic sulfonate-[sulfonate-binding protein]Side 1 = ADP + phosphate + aliphatic sulfonateSide 2 + [sulfonate-binding protein]Side 1.. Part of the ABC transporter complex SsuABC involved in aliphatic sulfonates import. Responsible for energy coupling to the transport system. This chain is Aliphatic sulfonates import ATP-binding protein SsuB, found in Pseudomonas entomophila (strain L48).